The chain runs to 55 residues: Large ribosomal subunit protein bL32c (55 aa).

This sequence belongs to the bacterial ribosomal protein bL32 family.

It is found in the plastid. The protein localises to the chloroplast. This Daucus carota (Wild carrot) protein is Large ribosomal subunit protein bL32c.